We begin with the raw amino-acid sequence, 567 residues long: Multidrug and toxin extrusion protein 1 (567 aa).

The residue at position 1 (methionine 1) is an N-acetylmethionine. The Cytoplasmic segment spans residues 1–37 (MERTEESAPGPGGADAASERRGLRCLLLPGFLEELRA). Phosphoserine is present on serine 18. A helical membrane pass occupies residues 38-58 (LLVLAGPAFLAQLMMFLISFI). The Extracellular segment spans residues 59–72 (SSVFCGHLGKLELD). A helical transmembrane segment spans residues 73–93 (AVTLAIAVINVTGISVGHGLS). Residues 94–120 (SACDTLISQTYGSQNLKHVGVILQRGT) are Cytoplasmic-facing. Residues 121 to 141 (LILLLCCFPCWALFINTEQIL) traverse the membrane as a helical segment. Topologically, residues 142-152 (LLFRQDPDVSR) are extracellular. A helical membrane pass occupies residues 153–173 (LTQTYVMIFIPALPAAFLYTL). Topologically, residues 174–187 (QVKYLLNQGIVLPQ) are cytoplasmic. A helical membrane pass occupies residues 188–208 (IMTGIAANLVNALANYVFLYH). The Extracellular portion of the chain corresponds to 209–216 (LHLGVMGS). Residues 217–237 (ALANTISQFALAIFLFLYILW) traverse the membrane as a helical segment. At 238–257 (RRLHQATWGGWSWECLQDWA) the chain is on the cytoplasmic side. Residues 258-277 (SFLRLAIPSMLMLCIEWWAY) form a helical membrane-spanning segment. Residues 278–295 (EVGSFLSGILGMVELGAQ) lie on the Extracellular side of the membrane. A helical transmembrane segment spans residues 296-316 (SITYELAIIVYMIPSGFSVAA). The Cytoplasmic portion of the chain corresponds to 317 to 336 (NVRVGNALGAGNIDQAKKSS). Residues 337 to 357 (AISLIVTELFAVTFCVLLLGC) form a helical membrane-spanning segment. Residues 358 to 370 (KDLVGYIFTTDRD) lie on the Extracellular side of the membrane. The chain crosses the membrane as a helical span at residues 371-391 (IVALVAQVIPIYAVSHLFEGL). The Cytoplasmic segment spans residues 392–408 (ACTCGGILRGTGNQKVG). A helical membrane pass occupies residues 409-429 (AIVNAIGYYVIGLPIGIALMF). Residues 430–437 (AAKLGVIG) are Extracellular-facing. Residues 438–458 (LWSGIIICTTCQTTCFLAFIA) form a helical membrane-spanning segment. Topologically, residues 459–543 (RLNWKRACQQ…LSGKQLALRR (85 aa)) are cytoplasmic. The helical transmembrane segment at 544 to 564 (GLLLLGVVLVLVGGILVRVYI) threads the bilayer. At 565 to 567 (RIE) the chain is on the extracellular side.

It belongs to the multi antimicrobial extrusion (MATE) (TC 2.A.66.1) family. As to expression, predominantly expressed in kidney and liver. Also expressed in various cells, including brain glia-like cells and capillaries, pancreatic duct cells, urinary bladder epithelium, adrenal gland cortex, heart, stomach, small intestine, thyroid gland, testes, alpha cells of the islets of Langerhans, Leydig cells, and vitamin A-storing Ito cells. Expressed in heart, stomach, small intestine, bladder, thyroid gland, adrenal gland and testes (at protein level).

The protein resides in the cell membrane. Its subcellular location is the apical cell membrane. The catalysed reaction is thiamine(out) + H(+)(in) = thiamine(in) + H(+)(out). The enzyme catalyses estrone 3-sulfate(in) + H(+)(out) = estrone 3-sulfate(out) + H(+)(in). It carries out the reaction creatinine(in) + H(+)(out) = creatinine(out) + H(+)(in). It catalyses the reaction agmatine(in) + H(+)(out) = agmatine(out) + H(+)(in). Functionally, multidrug efflux pump that functions as a H(+)/organic cation antiporter. Plays a physiological role in the excretion of cationic compounds including endogenous metabolites, drugs, toxins through the kidney and liver, into urine and bile respectively. Mediates the efflux of endogenous compounds such as creatinine, vitamin B1/thiamine, agmatine and estrone-3-sulfate. May also contribute to regulate the transport of cationic compounds in testis across the blood-testis-barrier. This chain is Multidrug and toxin extrusion protein 1 (Slc47a1), found in Mus musculus (Mouse).